A 210-amino-acid polypeptide reads, in one-letter code: MITIFEALERVRVIPVVTLERVEDAVPLARALITGGIRCMEVTFRTLVAAEAIAAIRQECADVLLGAGTVLTVEQAQQAQAAGAQFVVSPGFNPRVVAHCLGHGVPIIPGIASATEIERALEFGISVVKFFPAELLGGTAMMSALARPYTAVRFVPTGGIHLNNLAEYVAHPRVLACGGSWMVPAQSIAAGDFSQVTALSQQTLQIVGVM.

E41 (proton acceptor) is an active-site residue. Pyruvate is bound by residues R45, T69, and K129. K129 (schiff-base intermediate with substrate) is an active-site residue.

The protein belongs to the KHG/KDPG aldolase family. Homotrimer.

Its subcellular location is the cytoplasm. The catalysed reaction is 2-dehydro-3-deoxy-6-phospho-D-gluconate = D-glyceraldehyde 3-phosphate + pyruvate. The protein operates within carbohydrate acid metabolism; 2-dehydro-3-deoxy-D-gluconate degradation; D-glyceraldehyde 3-phosphate and pyruvate from 2-dehydro-3-deoxy-D-gluconate: step 2/2. Its function is as follows. Catalyzes the reversible, stereospecific retro-aldol cleavage of 2-keto-3-deoxy-6-phosphogluconate (KDPG) to pyruvate and D-glyceraldehyde-3-phosphate. In Treponema pallidum (strain Nichols), this protein is 2-dehydro-3-deoxy-phosphogluconate aldolase (eda).